Consider the following 452-residue polypeptide: GTPase Der (452 aa).

EngA-type G domains lie at 4–169 and 177–352; these read PIVA…PPPE and IKVA…EEHR. Residues 10-17, 57-61, 120-123, 183-190, 230-234, and 295-298 contribute to the GTP site; these read GRPNVGKS, DTGGL, NKCE, DTAGI, and NKWD. The 86-residue stretch at 353 to 438 folds into the KH-like domain; that stretch reads RRVTTAVINE…PIRLLWRGKK (86 aa).

This sequence belongs to the TRAFAC class TrmE-Era-EngA-EngB-Septin-like GTPase superfamily. EngA (Der) GTPase family. Associates with the 50S ribosomal subunit.

In terms of biological role, GTPase that plays an essential role in the late steps of ribosome biogenesis. This is GTPase Der from Rippkaea orientalis (strain PCC 8801 / RF-1) (Cyanothece sp. (strain PCC 8801)).